Consider the following 246-residue polypeptide: Probable transcriptional regulatory protein Dshi_2762 (246 aa).

Belongs to the TACO1 family.

It is found in the cytoplasm. The chain is Probable transcriptional regulatory protein Dshi_2762 from Dinoroseobacter shibae (strain DSM 16493 / NCIMB 14021 / DFL 12).